The sequence spans 193 residues: Dirigent protein (193 aa).

The signal sequence occupies residues 1–29 (MGGEKAFSFIFLLFLCFFLANLSASSAHP). Cysteines 40 and 192 form a disulfide. 2 N-linked (GlcNAc...) asparagine glycosylation sites follow: Asn59 and Asn129.

Belongs to the plant dirigent protein family. In terms of assembly, homodimer. As to expression, expressed in rhizomes, stems, and leaves.

Its subcellular location is the secreted. The protein resides in the extracellular space. It localises to the apoplast. It functions in the pathway aromatic compound metabolism; phenylpropanoid biosynthesis. Dirigent proteins impart stereoselectivity on the phenoxy radical-coupling reaction, yielding optically active lignans from two molecules of coniferyl alcohol in the biosynthesis of lignans, flavonolignans, and alkaloids and thus plays a central role in plant secondary metabolism. Also involved in the biosynthesis of etoposide, a chemotherapeutic compound of the topoisomerase inhibitor family. The protein is Dirigent protein of Sinopodophyllum hexandrum (Himalayan may apple).